The following is a 672-amino-acid chain: Forkhead box protein O3 (672 aa).

Disordered stretches follow at residues 1-85 (MAEA…GVSS) and 110-152 (GPAS…CSSR). A Phosphoserine modification is found at Ser30. Position 32 is a phosphothreonine (Thr32). The residue at position 46 (Lys46) is an N6-methyllysine. A compositionally biased stretch (acidic residues) spans 57 to 68 (IPEEDDDEDDED). The tract at residues 80–108 (GGGVSSTLGSGLLLEDSAMLLAPGGQDLG) is required for mitochondrial import. The segment covering 110–129 (GPASAAGALSGGTPTQLQPQ) has biased composition (low complexity). N6-methyllysine is present on Lys148. Residues 156–250 (WGNLSYADLI…KSGKAPRRRA (95 aa)) constitute a DNA-binding region (fork-head). Thr178 carries the phosphothreonine modification. Residues Ser208 and Ser214 each carry the phosphoserine modification. Lys229 carries the N6-methyllysine modification. The segment at 230 to 301 (SSWWIINPDG…GSPTSRSSDE (72 aa)) is disordered. N6-acetyllysine is present on Lys241. The Nuclear localization signal signature appears at 241 to 258 (KSGKAPRRRAVSMDNSNK). Ser252 is modified (phosphoserine). Positions 260 to 271 (TKSRGRAAKKKA) are enriched in basic residues. An N6-methyllysine mark is found at Lys261 and Lys270. 2 positions are modified to phosphoserine: Ser279 and Ser283. The span at 282–297 (DSPSQLSKWPGSPTSR) shows a compositional bias: polar residues. Lys289 is subject to N6-methyllysine. Ser293 is subject to Phosphoserine. Phosphoserine; by CaMK2A is present on Ser298. The tract at residues 299–672 (SDELDAWTDF…QASSQSWVPG (374 aa)) is mediates interaction with CHUK/IKKA and IKBKB/IKKB. A Phosphoserine modification is found at Ser310. A Phosphoserine; by SGK1 modification is found at Ser314. Phosphoserine; by AMPK is present on residues Ser398 and Ser412. Disordered regions lie at residues 399–441 (QPSP…SLNS) and 535–583 (HQHQ…QTLS). Composition is skewed to polar residues over residues 409-441 (RGSSFPYTAKSSGLGSPTGSFNSTVFGPSSLNS) and 548-577 (ALSNSVSNMGLSDSSSLGSAKHQQQSPASQ). Lys418 bears the N6-methyllysine mark. Ser420 is subject to Phosphoserine. At Ser550 the chain carries Phosphoserine; by MAPKAPK5. At Ser554 the chain carries Phosphoserine; by AMPK and MAPKAPK5. Phosphoserine; by AMPK is present on residues Ser587 and Ser625. Ser643 bears the Phosphoserine; by IKKB mark.

Upon metabolic stress, forms a complex composed of FOXO3, SIRT3 and mitochondrial RNA polymerase POLRMT; the complex is recruited to mtDNA in a SIRT3-dependent manner. Also forms a complex composed of FOXO3, SIRT3, TFAM and POLRMT. Interacts with SIRT2; the interaction occurs independently of SIRT2 deacetylase activity. Interacts with YWHAB/14-3-3-beta and YWHAZ/14-3-3-zeta, which are required for cytosolic sequestration. Upon oxidative stress, interacts with STK4/MST1, which disrupts interaction with YWHAB/14-3-3-beta and leads to nuclear translocation. Interacts with PIM1. Interacts with DDIT3/CHOP. Interacts (deacetylated form) with SKP2. Interacts with CHUK and IKBKB. Interacts with CAMK2A, CAMK2B and calcineurin A. Interacts with NUPR1; this interaction represses FOXO3 transactivation. Deacetylation by SIRT1 or SIRT2 stimulates interaction of FOXO3 with SKP2 and facilitates SCF(SKP2)-mediated FOXO3 ubiquitination and proteasomal degradation. Deacetylation by SIRT2 stimulates FOXO3-mediated transcriptional activity in response to oxidative stress. Deacetylated by SIRT3. Deacetylation by SIRT3 stimulates FOXO3-mediated mtDNA transcriptional activity in response to metabolic stress. In terms of processing, in the presence of survival factors such as IGF1, phosphorylated on Thr-32 and Ser-252 by AKT1/PKB. This phosphorylated form then interacts with 14-3-3 proteins and is retained in the cytoplasm. Survival factor withdrawal induces dephosphorylation and promotes translocation to the nucleus where the dephosphorylated protein induces transcription of target genes and triggers apoptosis. Although AKT1/PKB doesn't appear to phosphorylate Ser-314 directly, it may activate other kinases that trigger phosphorylation at this residue. Phosphorylated by STK4/MST1 on Ser-208 upon oxidative stress, which leads to dissociation from YWHAB/14-3-3-beta and nuclear translocation. Phosphorylated by PIM1. Phosphorylation by AMPK leads to the activation of transcriptional activity without affecting subcellular localization. Phosphorylated by AMPK on Ser-30 in response to metabolic stress which mediates FOXO3 mitochondrial translocation. Phosphorylation by MAPKAPK5 promotes nuclear localization and DNA-binding, leading to induction of miR-34b and miR-34c expression, 2 post-transcriptional regulators of MYC that bind to the 3'UTR of MYC transcript and prevent its translation. Phosphorylated by CHUK/IKKA and IKBKB/IKKB. TNF-induced inactivation of FOXO3 requires its phosphorylation at Ser-643 by IKBKB/IKKB which promotes FOXO3 retention in the cytoplasm, polyubiquitination and ubiquitin-mediated proteasomal degradation. May be dephosphorylated by calcineurin A on Ser-298 which abolishes FOXO3 transcriptional activity. Phosphorylation at Ser-252 promotes its degradation by the proteasome. Dephosphorylation at Ser-252 by protein phosphatase 2A (PPP2CA) promotes its stabilization; interaction with PPP2CA is enhanced by AMBRA1. Post-translationally, heavily methylated by SET9 which decreases stability, while moderately increasing transcriptional activity. The main methylation site is Lys-270. Methylation doesn't affect subcellular location. Polyubiquitinated. Ubiquitinated by a SCF complex containing SKP2, leading to proteasomal degradation. In terms of processing, the N-terminus is cleaved following import into the mitochondrion. In terms of tissue distribution, expressed in white and brown adipose tissues (at protein level). Expressed in liver, kidney, lung and colon (at protein level). Expressed in skeletal muscles (at protein level).

It localises to the cytoplasm. It is found in the cytosol. The protein resides in the nucleus. Its subcellular location is the mitochondrion matrix. The protein localises to the mitochondrion outer membrane. In terms of biological role, transcriptional activator that recognizes and binds to the DNA sequence 5'-[AG]TAAA[TC]A-3' and regulates different processes, such as apoptosis and autophagy. Acts as a positive regulator of autophagy in skeletal muscle: in starved cells, enters the nucleus following dephosphorylation and binds the promoters of autophagy genes, such as GABARAP1L, MAP1LC3B and ATG12, thereby activating their expression, resulting in proteolysis of skeletal muscle proteins. Triggers apoptosis in the absence of survival factors, including neuronal cell death upon oxidative stress. Participates in post-transcriptional regulation of MYC: following phosphorylation by MAPKAPK5, promotes induction of miR-34b and miR-34c expression, 2 post-transcriptional regulators of MYC that bind to the 3'UTR of MYC transcript and prevent its translation. In response to metabolic stress, translocates into the mitochondria where it promotes mtDNA transcription. Also acts as a key regulator of chondrogenic commitment of skeletal progenitor cells in response to lipid availability: when lipids levels are low, translocates to the nucleus and promotes expression of SOX9, which induces chondrogenic commitment and suppresses fatty acid oxidation. Also acts as a key regulator of regulatory T-cells (Treg) differentiation by activating expression of FOXP3. The polypeptide is Forkhead box protein O3 (Mus musculus (Mouse)).